Consider the following 75-residue polypeptide: RNA-binding protein KhpA (75 aa).

A KH domain is found at serine 29–isoleucine 75.

This sequence belongs to the KhpA RNA-binding protein family. Forms a complex with KhpB.

Its subcellular location is the cytoplasm. Functionally, a probable RNA chaperone. Forms a complex with KhpB which binds to cellular RNA and controls its expression. Plays a role in peptidoglycan (PG) homeostasis and cell length regulation. The sequence is that of RNA-binding protein KhpA from Caldanaerobacter subterraneus subsp. tengcongensis (strain DSM 15242 / JCM 11007 / NBRC 100824 / MB4) (Thermoanaerobacter tengcongensis).